The primary structure comprises 561 residues: MAVYVNSTTGPPSSVVRNSAGFHPSIWGDTFIPSGNSAVQKTDVDRKEEENLQLLKQEVKKMLTAGDTCQQDLICLIDDIQRLGLSYHFEAEIDTLLQHVKDSYLEYYGTKNHDNLHDVALSFRLLRQEGHNISSDVFSKFQDSDGKFNEKLVKDVRGMLSLFEAAHLSVHGENILEDALEFTTSHLNSYLNSNPNAPLADLVRRALKYPLRKSFNRMVARHYISIYHKYYWHKQVLLDLAKCDFNLVQKVHQKELGYITRWWKDLDFTNKLPFARDRVVECYFWITGVYFEPRYAAPRKFLTKVISLTSIIDDIYDVYGTPEELVQLTDAIDKWDINILDQLPEYMRHAYKPLLDVFAEGEEEMAKEGLPTYGVDYAKEAFKRLTVTYLHEAKWLQAQYFPTFEEYMSVALVSGAVKMLSVSSFVRMGNIATREAFEWLSKDPLIVNGLSVICRLSDDIVGHEFENQRPHIPSAVECYMKSHHVTKETAYAELRKPIINAWKDMNEECLQPEAPPKPLLERVFNLARVINFLYDGHDGYTHSSTRTKDMITSVLINPIPA.

Positions 313, 317, 458, and 466 each coordinate Mg(2+). Positions 313 to 317 (DDIYD) match the DDXXD motif motif.

Belongs to the terpene synthase family. Tpsa subfamily. Mn(2+) is required as a cofactor. The cofactor is Mg(2+).

The protein resides in the cytoplasm. The catalysed reaction is (2E,6E)-farnesyl diphosphate + H2O = kunzeaol + diphosphate. It participates in secondary metabolite biosynthesis; terpenoid biosynthesis. Its function is as follows. Involved in the biosynthesis of kunzeaol. Produces mainly (-)-germacrene D along with gamma-cadinene. The sequence is that of Sesquiterpene synthase 2 (STS2) from Thapsia garganica (Deadly carrot).